Consider the following 530-residue polypeptide: Growth-regulating factor 1 (530 aa).

The segment at 1–41 is disordered; it reads MDLGVRVSGHETVSSPGQTELGSGFSNKQERSGFDGEDCWR. Polar residues predominate over residues 11-27; it reads ETVSSPGQTELGSGFSN. Positions 28 to 41 are enriched in basic and acidic residues; that stretch reads KQERSGFDGEDCWR. Residues 133 to 168 form the QLQ domain; it reads PFSLTQWAELEQQALIYKYITANVPVPSSLLLSLKK. The WRC domain maps to 196 to 240; that stretch reads DPEPGRCRRTDGKKWRCSRDAVPDQKYCERHINRGRHRSRKPVEG. 2 consecutive short sequence motifs (bipartite nuclear localization signal) follow at residues 201 to 211 and 229 to 236; these read RCRRTDGKKWR and RGRHRSRK. Disordered regions lie at residues 223-250 and 485-530; these read CERH…NAAA and STFG…APSL. Over residues 485–508 the composition is skewed to low complexity; it reads STFGSLSNSSSASSTIIGDNNNKN. Positions 519–530 are enriched in polar residues; the sequence is TLMNTSATAPSL.

The protein belongs to the GRF family. In terms of assembly, interacts with GIF1 and GIF2. In terms of tissue distribution, strongly expressed in actively growing and developing tissues, such as roots, upper stems, and shoot tips containing the shoot apical meristem (SAM) and flower buds. Also expressed in mature flowers, but weakly expressed in mature stems and leaves.

The protein localises to the nucleus. Transcription activator that plays a role in the regulation of cell expansion in leaf and cotyledons tissues. Component of a network formed by miR396, the GRFs and their interacting factors (GIFs) acting in the regulation of meristem function, at least partially through the control of cell proliferation. microRNA396-GRF1/GRF3 regulatory module acts as a developmental regulator in the reprogramming of root cells during cyst nematode infection, leading to the formation of the syncytium. The polypeptide is Growth-regulating factor 1 (GRF1) (Arabidopsis thaliana (Mouse-ear cress)).